A 1370-amino-acid polypeptide reads, in one-letter code: DNA-directed RNA polymerase subunit beta (1370 aa).

The protein belongs to the RNA polymerase beta chain family. In terms of assembly, the RNAP catalytic core consists of 2 alpha, 1 beta, 1 beta' and 1 omega subunit. When a sigma factor is associated with the core the holoenzyme is formed, which can initiate transcription.

It carries out the reaction RNA(n) + a ribonucleoside 5'-triphosphate = RNA(n+1) + diphosphate. Functionally, DNA-dependent RNA polymerase catalyzes the transcription of DNA into RNA using the four ribonucleoside triphosphates as substrates. This chain is DNA-directed RNA polymerase subunit beta, found in Bordetella parapertussis (strain 12822 / ATCC BAA-587 / NCTC 13253).